We begin with the raw amino-acid sequence, 248 residues long: uncharacterized protein (248 aa).

Residue S141 coordinates substrate. Y154 acts as the Proton acceptor in catalysis.

This sequence belongs to the short-chain dehydrogenases/reductases (SDR) family.

This is an uncharacterized protein from Methylorubrum extorquens (strain ATCC 14718 / DSM 1338 / JCM 2805 / NCIMB 9133 / AM1) (Methylobacterium extorquens).